We begin with the raw amino-acid sequence, 177 residues long: Large ribosomal subunit protein uL6 (177 aa).

Belongs to the universal ribosomal protein uL6 family. In terms of assembly, part of the 50S ribosomal subunit.

Functionally, this protein binds to the 23S rRNA, and is important in its secondary structure. It is located near the subunit interface in the base of the L7/L12 stalk, and near the tRNA binding site of the peptidyltransferase center. In Vibrio vulnificus (strain CMCP6), this protein is Large ribosomal subunit protein uL6.